A 161-amino-acid chain; its full sequence is Cytochrome c-type biogenesis protein CcmE (161 aa).

The Cytoplasmic portion of the chain corresponds to 1 to 8 (MNPRRQKR). Residues 9 to 29 (LGIILAILIGVSATIGLMIYA) traverse the membrane as a helical; Signal-anchor for type II membrane protein segment. Topologically, residues 30–161 (LNQNMDLFYT…SEEQKQGSGQ (132 aa)) are periplasmic. Heme is bound by residues histidine 129 and tyrosine 133.

Belongs to the CcmE/CycJ family.

The protein localises to the cell inner membrane. In terms of biological role, heme chaperone required for the biogenesis of c-type cytochromes. Transiently binds heme delivered by CcmC and transfers the heme to apo-cytochromes in a process facilitated by CcmF and CcmH. This Vibrio vulnificus (strain CMCP6) protein is Cytochrome c-type biogenesis protein CcmE.